The sequence spans 435 residues: Glutamyl-tRNA reductase (435 aa).

Substrate is bound by residues 50 to 53 (TCNR), S110, 115 to 117 (ESQ), and Q121. C51 serves as the catalytic Nucleophile. Residue 191-196 (GAGDMG) participates in NADP(+) binding.

The protein belongs to the glutamyl-tRNA reductase family. Homodimer.

The enzyme catalyses (S)-4-amino-5-oxopentanoate + tRNA(Glu) + NADP(+) = L-glutamyl-tRNA(Glu) + NADPH + H(+). The protein operates within porphyrin-containing compound metabolism; protoporphyrin-IX biosynthesis; 5-aminolevulinate from L-glutamyl-tRNA(Glu): step 1/2. Functionally, catalyzes the NADPH-dependent reduction of glutamyl-tRNA(Glu) to glutamate 1-semialdehyde (GSA). This Sulfurovum sp. (strain NBC37-1) protein is Glutamyl-tRNA reductase.